A 522-amino-acid chain; its full sequence is Protein nucleotidyltransferase YdiU (522 aa).

ATP-binding residues include Gly-109, Gly-111, Arg-112, Lys-132, Asp-144, Gly-145, Arg-195, and Arg-202. Catalysis depends on Asp-271, which acts as the Proton acceptor. Asn-272 and Asp-281 together coordinate Mg(2+). ATP is bound at residue Asp-281.

It belongs to the SELO family. It depends on Mg(2+) as a cofactor. Mn(2+) is required as a cofactor.

The catalysed reaction is L-seryl-[protein] + ATP = 3-O-(5'-adenylyl)-L-seryl-[protein] + diphosphate. It carries out the reaction L-threonyl-[protein] + ATP = 3-O-(5'-adenylyl)-L-threonyl-[protein] + diphosphate. The enzyme catalyses L-tyrosyl-[protein] + ATP = O-(5'-adenylyl)-L-tyrosyl-[protein] + diphosphate. It catalyses the reaction L-histidyl-[protein] + UTP = N(tele)-(5'-uridylyl)-L-histidyl-[protein] + diphosphate. The catalysed reaction is L-seryl-[protein] + UTP = O-(5'-uridylyl)-L-seryl-[protein] + diphosphate. It carries out the reaction L-tyrosyl-[protein] + UTP = O-(5'-uridylyl)-L-tyrosyl-[protein] + diphosphate. Functionally, nucleotidyltransferase involved in the post-translational modification of proteins. It can catalyze the addition of adenosine monophosphate (AMP) or uridine monophosphate (UMP) to a protein, resulting in modifications known as AMPylation and UMPylation. The protein is Protein nucleotidyltransferase YdiU of Burkholderia vietnamiensis (strain G4 / LMG 22486) (Burkholderia cepacia (strain R1808)).